Here is a 336-residue protein sequence, read N- to C-terminus: Glyceraldehyde-3-phosphate dehydrogenase, plasmid (336 aa).

Residues arginine 12–isoleucine 13, aspartate 37, arginine 81, and serine 123 each bind NAD(+). Residues serine 154–threonine 156 and threonine 185 each bind D-glyceraldehyde 3-phosphate. Cysteine 155 serves as the catalytic Nucleophile. Asparagine 186 is a binding site for NAD(+). D-glyceraldehyde 3-phosphate-binding positions include arginine 200, threonine 213 to glycine 214, and arginine 236. Position 317 (asparagine 317) interacts with NAD(+).

The protein belongs to the glyceraldehyde-3-phosphate dehydrogenase family. In terms of assembly, homotetramer.

It carries out the reaction D-glyceraldehyde 3-phosphate + phosphate + NAD(+) = (2R)-3-phospho-glyceroyl phosphate + NADH + H(+). It functions in the pathway carbohydrate biosynthesis; Calvin cycle. In terms of biological role, could be involved in carbon fixation as a component of the Calvin cycle. Catalyzes the oxidative phosphorylation of glyceraldehyde 3-phosphate (G3P) to 1,3-bisphosphoglycerate (BPG) using the cofactor NAD. The first reaction step involves the formation of a hemiacetal intermediate between G3P and a cysteine residue, and this hemiacetal intermediate is then oxidized to a thioester, with concomitant reduction of NAD to NADH. The reduced NADH is then exchanged with the second NAD, and the thioester is attacked by a nucleophilic inorganic phosphate to produce BPG. This chain is Glyceraldehyde-3-phosphate dehydrogenase, plasmid (cbbGP), found in Cupriavidus necator (strain ATCC 17699 / DSM 428 / KCTC 22496 / NCIMB 10442 / H16 / Stanier 337) (Ralstonia eutropha).